Here is a 287-residue protein sequence, read N- to C-terminus: ATP synthase gamma chain (287 aa).

The protein belongs to the ATPase gamma chain family. As to quaternary structure, F-type ATPases have 2 components, CF(1) - the catalytic core - and CF(0) - the membrane proton channel. CF(1) has five subunits: alpha(3), beta(3), gamma(1), delta(1), epsilon(1). CF(0) has three main subunits: a, b and c.

It localises to the cell inner membrane. Produces ATP from ADP in the presence of a proton gradient across the membrane. The gamma chain is believed to be important in regulating ATPase activity and the flow of protons through the CF(0) complex. The protein is ATP synthase gamma chain of Geotalea daltonii (strain DSM 22248 / JCM 15807 / FRC-32) (Geobacter daltonii).